A 90-amino-acid chain; its full sequence is Acylphosphatase (90 aa).

In terms of domain architecture, Acylphosphatase-like spans 5-90 (CERFIVKGHV…YKPFRGFKIL (86 aa)). Catalysis depends on residues Arg20 and Asn38.

Belongs to the acylphosphatase family.

The catalysed reaction is an acyl phosphate + H2O = a carboxylate + phosphate + H(+). The protein is Acylphosphatase (acyP) of Vibrio parahaemolyticus serotype O3:K6 (strain RIMD 2210633).